The following is a 489-amino-acid chain: MSVWNAVHLSRRFAALPQAFYTPVHPQPLQNVRWGMWNSRLAQQFGLPEAPNDELLLSLSGQQLPADFSPVAMKYAGHQFGVYNPDLGDGRGLLLAEMATKQGEVFDIHLKGAGLTPYSRMGDGRAVLRSSLREYLCSEAMAGLGIATTRALALMSSETPVYREREERGALLVRLAHTHVRFGHFEHFFYTDQHANLKLLADKVIEWHFPDCVQTSKPYAAWFSQVVERTALMIAQWQAYGFNHGVMNTDNMSILGETFDYGPFAFLDDYDPNFICNHSDYQGRYAFDQQPRIGLWNLSALAHALSPLIDKDDLEAALGSYSERLNLHFSRLMRAKLGLATQQEGDGELFADFFALLANNHTDYTRFLRELSCLDRQGNEAVIDLVLDREAAKTWLTRYLERAARELGQEGRPISTRERCQAMRQVNPKYILRNYLAQQAIEFAERGDFEEMQRLATVLASPYAEHPEFERYAKLPPEWGKKLEISCSS.

Residues Gly-88, Gly-90, Arg-91, Lys-111, Asp-123, Gly-124, Arg-174, and Arg-181 each contribute to the ATP site. Asp-250 serves as the catalytic Proton acceptor. The Mg(2+) site is built by Asn-251 and Asp-260. Asp-260 contacts ATP.

This sequence belongs to the SELO family. Mg(2+) serves as cofactor. It depends on Mn(2+) as a cofactor.

It catalyses the reaction L-seryl-[protein] + ATP = 3-O-(5'-adenylyl)-L-seryl-[protein] + diphosphate. The catalysed reaction is L-threonyl-[protein] + ATP = 3-O-(5'-adenylyl)-L-threonyl-[protein] + diphosphate. The enzyme catalyses L-tyrosyl-[protein] + ATP = O-(5'-adenylyl)-L-tyrosyl-[protein] + diphosphate. It carries out the reaction L-histidyl-[protein] + UTP = N(tele)-(5'-uridylyl)-L-histidyl-[protein] + diphosphate. It catalyses the reaction L-seryl-[protein] + UTP = O-(5'-uridylyl)-L-seryl-[protein] + diphosphate. The catalysed reaction is L-tyrosyl-[protein] + UTP = O-(5'-uridylyl)-L-tyrosyl-[protein] + diphosphate. Nucleotidyltransferase involved in the post-translational modification of proteins. It can catalyze the addition of adenosine monophosphate (AMP) or uridine monophosphate (UMP) to a protein, resulting in modifications known as AMPylation and UMPylation. The polypeptide is Protein nucleotidyltransferase YdiU (Vibrio cholerae serotype O1 (strain ATCC 39315 / El Tor Inaba N16961)).